A 952-amino-acid polypeptide reads, in one-letter code: Protein translocase subunit SecA (952 aa).

Residues Q135, 153-157, and D575 contribute to the ATP site; that span reads GEGKT. The segment covering 907–921 has biased composition (low complexity); it reads AAPAAAIPGVSAKAA. The segment at 907–946 is disordered; it reads AAPAAAIPGVSAKAATQSTTPAAKEIGRNDPCPCGSGKKY. C938, C940, C949, and C950 together coordinate Zn(2+).

It belongs to the SecA family. In terms of assembly, monomer and homodimer. Part of the essential Sec protein translocation apparatus which comprises SecA, SecYEG and auxiliary proteins SecDF. Other proteins may also be involved. The cofactor is Zn(2+).

It is found in the cell membrane. It localises to the cytoplasm. It catalyses the reaction ATP + H2O + cellular proteinSide 1 = ADP + phosphate + cellular proteinSide 2.. Part of the Sec protein translocase complex. Interacts with the SecYEG preprotein conducting channel. Has a central role in coupling the hydrolysis of ATP to the transfer of proteins into and across the cell membrane, serving as an ATP-driven molecular motor driving the stepwise translocation of polypeptide chains across the membrane. The polypeptide is Protein translocase subunit SecA (Dehalococcoides mccartyi (strain CBDB1)).